We begin with the raw amino-acid sequence, 328 residues long: Phosphate acetyltransferase (328 aa).

This sequence belongs to the phosphate acetyltransferase and butyryltransferase family.

The protein resides in the cytoplasm. The catalysed reaction is acetyl-CoA + phosphate = acetyl phosphate + CoA. The protein operates within metabolic intermediate biosynthesis; acetyl-CoA biosynthesis; acetyl-CoA from acetate: step 2/2. This is Phosphate acetyltransferase (pta) from Staphylococcus aureus (strain MSSA476).